Consider the following 1084-residue polypeptide: Cellulose synthase A catalytic subunit 6 [UDP-forming] (1084 aa).

N-acetylmethionine is present on M1. At 1-277 (MNTGGRLIAG…KSSKINPYRM (277 aa)) the chain is on the cytoplasmic side. Residues C39, C42, C58, C61, C66, C69, C81, and C84 each contribute to the Zn(2+) site. Residues 39–85 (CQICRDEIELTVDGEPFVACNECAFPVCRPCYEYERREGNQACPQCK) form an RING-type; degenerate zinc finger. A helical membrane pass occupies residues 278–298 (LIVLRLVILGLFFHYRILHPV). The Extracellular portion of the chain corresponds to 299-300 (KD). The helical transmembrane segment at 301–321 (AYALWLISVICEIWFAVSWVL) threads the bilayer. The Cytoplasmic portion of the chain corresponds to 322–868 (DQFPKWYPIE…INSVVYPWTS (547 aa)). UDP-alpha-D-glucose is bound by residues S360, K366, E367, and D396. Residue D396 is part of the active site. Residues 450–476 (VRERRAMKRDYEEFKVKINALVATAQK) adopt a coiled-coil conformation. K537 contacts UDP-alpha-D-glucose. K538 and D562 together coordinate Mn(2+). Positions 675-703 (RKAKTVAADKKKKNREASKQIHALENIEE) form a coiled coil. D785 is a catalytic residue. Residues 869–889 (LPLIVYCSLPAICLLTGKFIV) form a helical membrane-spanning segment. Over 890–894 (PEISN) the chain is Extracellular. The chain crosses the membrane as a helical span at residues 895–915 (YASILFMALFSSIAITGILEM). At 916 to 930 (QWGKVGIDDWWRNEQ) the chain is on the cytoplasmic side. Residues 931 to 951 (FWVIGGVSAHLFALFQGLLKV) traverse the membrane as a helical segment. The Extracellular segment spans residues 952-980 (LAGVDTNFTVTSKAADDGEFSDLYLFKWT). N-linked (GlcNAc...) asparagine glycosylation is present at N958. The helical transmembrane segment at 981-1001 (SLLIPPMTLLIINVIGVIVGV) threads the bilayer. Topologically, residues 1002–1012 (SDAISNGYDSW) are cytoplasmic. A helical membrane pass occupies residues 1013 to 1033 (GPLFGRLFFALWVIIHLYPFL). Topologically, residues 1034 to 1042 (KGLLGKQDR) are extracellular. Residues 1043-1063 (MPTIIVVWSILLASILTLLWV) traverse the membrane as a helical segment. Residues 1064–1084 (RVNPFVAKGGPILEICGLDCL) are Cytoplasmic-facing.

It belongs to the glycosyltransferase 2 family. Plant cellulose synthase subfamily. In terms of assembly, interacts with CESA1 and CESA3. Interacts with STL1 and STL2, but not with GOT1. Binds to CSI1 and CSI3. Interacts with PAT24/TIP1. Zn(2+) is required as a cofactor. Requires Mn(2+) as cofactor. S-acylated. Expressed in germinating seeds, seedlings, roots, stems, leaves and flowers. Not present in mature flowers.

It is found in the cell membrane. The enzyme catalyses [(1-&gt;4)-beta-D-glucosyl](n) + UDP-alpha-D-glucose = [(1-&gt;4)-beta-D-glucosyl](n+1) + UDP + H(+). The protein operates within glycan metabolism; plant cellulose biosynthesis. Its function is as follows. Catalytic subunit of cellulose synthase terminal complexes ('rosettes'), required for beta-1,4-glucan microfibril crystallization, a major mechanism of the cell wall formation. Involved in the primary cell wall formation. The presence of each protein CESA1 and CESA6 is critical for cell expansion. The hypocotyl elongation is based on a CESA6-dependent cell elongation in dark and a CESA6-independent cell elongation in light. The transition between these two mechanisms requires photosynthesis and PHYB, but not CRY1. The CESA6-dependent cell elongation seems to be independent of gibberellic acid, auxin and ethylene. May be involved in sensitivity to isoxaben. Associates with and moves along cortical microtubules for the process of cellulose deposition. The protein is Cellulose synthase A catalytic subunit 6 [UDP-forming] of Arabidopsis thaliana (Mouse-ear cress).